The primary structure comprises 433 residues: Alpha-(1-&gt;3)-arabinofuranosyltransferase (433 aa).

The next 10 helical transmembrane spans lie at 118–138 (LFIS…LRMF), 140–160 (FTLT…TETV), 164–184 (LVFT…LRWL), 197–217 (LAIG…LLPL), 224–244 (ALVA…PLVS), 280–300 (WLIL…LWLL), 310–330 (LFWF…VMSL), 333–353 (GYYS…NSVI), 356–376 (WPAW…LFNW), and 385–405 (YLKI…VLYF).

The protein belongs to the glycosyltransferase 87 family.

The protein localises to the cell membrane. It carries out the reaction Adds an alpha-D-arabinofuranosyl group from trans,octacis-decaprenylphospho-beta-D-arabinofuranose at the 3-O-position of an alpha-(1-&gt;5)-arabinofuranan chain attached to a beta-(1-&gt;5)-galactofuranan chain.. The protein operates within cell wall biogenesis; cell wall polysaccharide biosynthesis. Involved in the biosynthesis of the arabinogalactan (AG) region of the mycolylarabinogalactan-peptidoglycan (mAGP) complex, an essential component of the mycobacterial cell wall. Catalyzes the addition of an arabinofuranosyl (Araf) residue from the sugar donor beta-D-arabinofuranosyl-1-monophosphoryldecaprenol (DPA) on the C-3 of an alpha-(1-&gt;5)-linked Araf from the arabinan backbone of AG. The polypeptide is Alpha-(1-&gt;3)-arabinofuranosyltransferase (aftC) (Mycobacterium tuberculosis (strain CDC 1551 / Oshkosh)).